The following is a 209-amino-acid chain: 8-oxoguanine DNA glycosylase/AP lyase (209 aa).

Residues K132 and D150 contribute to the active site.

The protein belongs to the type-2 OGG1 family.

It carries out the reaction 2'-deoxyribonucleotide-(2'-deoxyribose 5'-phosphate)-2'-deoxyribonucleotide-DNA = a 3'-end 2'-deoxyribonucleotide-(2,3-dehydro-2,3-deoxyribose 5'-phosphate)-DNA + a 5'-end 5'-phospho-2'-deoxyribonucleoside-DNA + H(+). Its function is as follows. Catalyzes the excision of an oxidatively damaged form of guanine (7,8-dihydro-8-oxoguanine = 8-oxoG) from DNA. Also cleaves the DNA backbone at apurinic/apyrimidinic sites (AP sites). In Picrophilus torridus (strain ATCC 700027 / DSM 9790 / JCM 10055 / NBRC 100828 / KAW 2/3), this protein is 8-oxoguanine DNA glycosylase/AP lyase.